A 607-amino-acid polypeptide reads, in one-letter code: Putative pentatricopeptide repeat-containing protein At1g09680 (607 aa).

9 PPR repeats span residues 239–273, 274–308, 309–343, 344–378, 379–413, 414–448, 449–483, 484–518, and 519–553; these read NVYVFNILMNKFCKEGNISDAQKVFDEITKRSLQP, TVVSFNTLINGYCKVGNLDEGFRLKHQMEKSRTRP, DVFTYSALINALCKENKMDGAHGLFDEMCKRGLIP, NDVIFTTLIHGHSRNGEIDLMKESYQKMLSKGLQP, DIVLYNTLVNGFCKNGDLVAARNIVDGMIRRGLRP, DKITYTTLIDGFCRGGDVETALEIRKEMDQNGIEL, DRVGFSALVCGMCKEGRVIDAERALREMLRAGIKP, DDVTYTMMMDAFCKKGDAQTGFKLLKEMQSDGHVP, and SVVTYNVLLNGLCKLGQMKNADMLLDAMLNIGVVP.

It belongs to the PPR family. P subfamily.

The sequence is that of Putative pentatricopeptide repeat-containing protein At1g09680 from Arabidopsis thaliana (Mouse-ear cress).